The chain runs to 940 residues: Alanine--tRNA ligase (940 aa).

Zn(2+) is bound by residues His-581, His-585, Cys-683, and His-687.

It belongs to the class-II aminoacyl-tRNA synthetase family. Zn(2+) serves as cofactor.

It is found in the cytoplasm. The enzyme catalyses tRNA(Ala) + L-alanine + ATP = L-alanyl-tRNA(Ala) + AMP + diphosphate. Its function is as follows. Catalyzes the attachment of alanine to tRNA(Ala) in a two-step reaction: alanine is first activated by ATP to form Ala-AMP and then transferred to the acceptor end of tRNA(Ala). Also edits incorrectly charged Ser-tRNA(Ala) and Gly-tRNA(Ala) via its editing domain. The chain is Alanine--tRNA ligase from Leptospira borgpetersenii serovar Hardjo-bovis (strain JB197).